A 230-amino-acid chain; its full sequence is Rab15 effector protein (230 aa).

The N-myristoyl glycine moiety is linked to residue Gly-2.

Interacts with the GTP-bound form of RAB15, RAB3A-D and RAB34.

It is found in the early endosome membrane. Its function is as follows. Effector that interacts with Rab GTPases in their active form (GTP-bound) including RAB15, RAB3A-D and RAB34. Controls downstream signaling such as cell proliferation and cell migration. Also regulates transferrin receptor recycling from the endocytic recycling compartment. The sequence is that of Rab15 effector protein from Mus musculus (Mouse).